The sequence spans 900 residues: Trehalose-phosphatase (900 aa).

Disordered regions lie at residues 76 to 109 (SRLFNSKNRDKSENGEKGENDLHAKEEREKEEDP) and 874 to 900 (VKHSDSSIRSEQASARYAMKRQQSYKN). The span at 82–108 (KNRDKSENGEKGENDLHAKEEREKEED) shows a compositional bias: basic and acidic residues.

It in the C-terminal section; belongs to the trehalose phosphatase family. The protein in the N-terminal section; belongs to the glycosyltransferase 20 family. Mg(2+) is required as a cofactor.

The enzyme catalyses alpha,alpha-trehalose 6-phosphate + H2O = alpha,alpha-trehalose + phosphate. It participates in carbohydrate biosynthesis. In terms of biological role, phosphatase catalytic subunit of the trehalose synthase complex that catalyzes the production of trehalose from glucose-6-phosphate and UDP-alpha-D-glucose in a two step process. This chain is Trehalose-phosphatase, found in Zygosaccharomyces rouxii.